The primary structure comprises 341 residues: Methionine import ATP-binding protein MetN 3 (341 aa).

One can recognise an ABC transporter domain in the interval 2–241 (IEFQNVTKTF…PSHETTKRFI (240 aa)). ATP is bound at residue 38 to 45 (GFSGAGKS).

The protein belongs to the ABC transporter superfamily. Methionine importer (TC 3.A.1.24) family. As to quaternary structure, the complex is composed of two ATP-binding proteins (MetN), two transmembrane proteins (MetI) and a solute-binding protein (MetQ).

Its subcellular location is the cell membrane. It carries out the reaction L-methionine(out) + ATP + H2O = L-methionine(in) + ADP + phosphate + H(+). The enzyme catalyses D-methionine(out) + ATP + H2O = D-methionine(in) + ADP + phosphate + H(+). Part of the ABC transporter complex MetNIQ involved in methionine import. Responsible for energy coupling to the transport system. The protein is Methionine import ATP-binding protein MetN 3 of Oceanobacillus iheyensis (strain DSM 14371 / CIP 107618 / JCM 11309 / KCTC 3954 / HTE831).